A 178-amino-acid chain; its full sequence is RNA pyrophosphohydrolase (178 aa).

The Nudix hydrolase domain maps to 18 to 171 (PYRPCVGLMV…KRKVYEQVVA (154 aa)). Positions 59–80 (GGIDKGEDPAQAALRELYEETG) match the Nudix box motif.

Belongs to the Nudix hydrolase family. RppH subfamily. A divalent metal cation serves as cofactor.

Accelerates the degradation of transcripts by removing pyrophosphate from the 5'-end of triphosphorylated RNA, leading to a more labile monophosphorylated state that can stimulate subsequent ribonuclease cleavage. This is RNA pyrophosphohydrolase from Brucella melitensis biotype 2 (strain ATCC 23457).